Here is a 360-residue protein sequence, read N- to C-terminus: Peptide chain release factor 1 (360 aa).

At Gln235 the chain carries N5-methylglutamine. The tract at residues 284–313 (AKRQQAEASTRRNLLGSGDRSDRNRTYNFP) is disordered.

The protein belongs to the prokaryotic/mitochondrial release factor family. Methylated by PrmC. Methylation increases the termination efficiency of RF1.

The protein localises to the cytoplasm. In terms of biological role, peptide chain release factor 1 directs the termination of translation in response to the peptide chain termination codons UAG and UAA. The chain is Peptide chain release factor 1 from Salmonella gallinarum (strain 287/91 / NCTC 13346).